A 517-amino-acid polypeptide reads, in one-letter code: zeta-carotene-forming phytoene desaturase (517 aa).

11–44 (VVVGAGVGGLAAAARLAHQGFDVQVFEKTQGPGG) is an FAD binding site.

This sequence belongs to the carotenoid/retinoid oxidoreductase family. FAD serves as cofactor.

It carries out the reaction 15-cis-phytoene + 2 A = all-trans-zeta-carotene + 2 AH2. It participates in carotenoid biosynthesis; lycopene biosynthesis. Functionally, dehydrogenates carotenes in the cis conformation: has cis-to-trans isomerase activity and mediates dehydrogenation of cis-phytoene, producing zeta-carotene via the intermediary of phytofluene by the symmetrical introduction of 2 double bonds at the C-11 and C-11' positions of phytoene. The protein is zeta-carotene-forming phytoene desaturase (carA2) of Myxococcus xanthus.